A 525-amino-acid chain; its full sequence is GMP synthase [glutamine-hydrolyzing] (525 aa).

Residues 12-203 form the Glutamine amidotransferase type-1 domain; it reads TVLVVDFGAQ…LYRGAGLTPS (192 aa). Cys-89 serves as the catalytic Nucleophile. Catalysis depends on residues His-177 and Glu-179. Residues 204–399 enclose the GMPS ATP-PPase domain; sequence WTTGNVIDEQ…LGLPDEIVQR (196 aa). 231–237 lines the ATP pocket; it reads SGGVDSA.

Homodimer.

It carries out the reaction XMP + L-glutamine + ATP + H2O = GMP + L-glutamate + AMP + diphosphate + 2 H(+). The protein operates within purine metabolism; GMP biosynthesis; GMP from XMP (L-Gln route): step 1/1. In terms of biological role, catalyzes the synthesis of GMP from XMP. This Streptomyces avermitilis (strain ATCC 31267 / DSM 46492 / JCM 5070 / NBRC 14893 / NCIMB 12804 / NRRL 8165 / MA-4680) protein is GMP synthase [glutamine-hydrolyzing].